Reading from the N-terminus, the 727-residue chain is Glycerol-3-phosphate dehydrogenase, mitochondrial (727 aa).

The N-terminal 42 residues, 1–42 (MAFQKAVKGTILVGGGALATVLGLSPFAHYRRKQVSLAYVEA), are a transit peptide targeting the mitochondrion. Residue 71–99 (DILVIGGGATGCGCALDAVTRGLKTALVE) participates in FAD binding. Residue Tyr-601 is modified to Phosphotyrosine. 2 consecutive EF-hand domains span residues 623–658 (SDID…INVQ) and 659–694 (MDEN…VQKG). Positions 672, 674, 676, 678, and 683 each coordinate Ca(2+).

Belongs to the FAD-dependent glycerol-3-phosphate dehydrogenase family. FAD is required as a cofactor.

The protein localises to the mitochondrion inner membrane. It catalyses the reaction a quinone + sn-glycerol 3-phosphate = dihydroxyacetone phosphate + a quinol. Its pathway is polyol metabolism; glycerol degradation via glycerol kinase pathway; glycerone phosphate from sn-glycerol 3-phosphate (anaerobic route): step 1/1. Its activity is regulated as follows. Calcium-binding enhance the activity of the enzyme. Calcium-responsive mitochondrial glycerol-3-phosphate dehydrogenase which seems to be a key component of the pancreatic beta-cell glucose-sensing device. This Mus musculus (Mouse) protein is Glycerol-3-phosphate dehydrogenase, mitochondrial.